A 66-amino-acid chain; its full sequence is MAKGKDVRVRVILECTSCARNGGNKESRGISRYITQKNRHNTPSRLELRKFCPYCYKHTTHGEIKK.

Belongs to the bacterial ribosomal protein bL33 family.

It localises to the plastid. The protein resides in the chloroplast. The chain is Large ribosomal subunit protein bL33c from Ceratophyllum demersum (Rigid hornwort).